The following is a 303-amino-acid chain: HTH-type transcriptional regulator LinR (303 aa).

Residues 6 to 63 (LDFRHLVLLDALLKRHSVSAAARELDLPQPTASHGLARLRKALGDPLLVRARDGMEPT) enclose the HTH lysR-type domain. The segment at residues 23 to 42 (VSAAARELDLPQPTASHGLA) is a DNA-binding region (H-T-H motif).

It belongs to the LysR transcriptional regulatory family.

Positively regulates the transcription of the linD and linE genes that are involved in gamma-hexachlorocyclohexane (gamma-HCH or lindane) degradation. This degradation pathway allows S.japonicum UT26 to grow on gamma-HCH as the sole source of carbon and energy. In Sphingobium indicum (strain DSM 16413 / CCM 7287 / MTCC 6362 / UT26 / NBRC 101211 / UT26S) (Sphingobium japonicum), this protein is HTH-type transcriptional regulator LinR (linR).